Reading from the N-terminus, the 202-residue chain is GTP cyclohydrolase 1 (202 aa).

Positions 90, 93, and 163 each coordinate Zn(2+).

The protein belongs to the GTP cyclohydrolase I family. As to quaternary structure, homomer.

The enzyme catalyses GTP + H2O = 7,8-dihydroneopterin 3'-triphosphate + formate + H(+). The protein operates within cofactor biosynthesis; 7,8-dihydroneopterin triphosphate biosynthesis; 7,8-dihydroneopterin triphosphate from GTP: step 1/1. This chain is GTP cyclohydrolase 1, found in Mycolicibacterium gilvum (strain PYR-GCK) (Mycobacterium gilvum (strain PYR-GCK)).